The following is a 682-amino-acid chain: MSRKQLALFEPTLVVQALKEAVKKLNPQAQWRNPVMFIVWIGSLLTTCISIAMASDVMPGNALFSAAISGWLWVTVLFANFAEALAEGRSKAQANSLKGVKKTAFARKLREPKYGAAADKVPADQLRKGDIVLVEASDIIPCDGEVIEGGASVDESAITGESAPVIRESGGDFASVTGGTRILSDWLVIECSVNPGETFLDRMIAMVEGAQRRKTPNEIALTILLIALTIVFLLATATLWPFSAWGGNAVSVTVLVALLVCLIPTTIGGLLSAIGVAGMSRMLGANVIATSGRAVEAAGDVDVLLLDKTGTITLGNRQASEFIPAQGVEEKALADAAQLASLADETPEGRSIVILAKQRFNLRERDVQSLHATFVPFTAQSRMSGINIDNRMIRKGSVDAIRRHVEANGGHFPADVDQKVDQVARQGATPLVVVEGSRVLGVIALKDIVKGGIKERFAQLRKMGIKTVMITGDNRLTAAAIAAEAGVDDFLAEATPEAKLALIRQYQAEGRLVAMTGDGTNDAPALAQADVAVAMNSGTQAAKEAGNMVDLDSNPTKLIEVVHIGKQMLMTRGSLTTFSIANDVAKYFAIIPAAFAATYPQLNALNIMRLHSPDSAILSAVIFNALIIVFLIPLALKGVSYKPLTASAMLRRNLWIYGLGGLLVPFIGIKVIDLLLTVCGLV.

The next 4 membrane-spanning stretches (helical) occupy residues Pro34–Ala54, Ala62–Ala82, Ile219–Leu239, and Val254–Ile274. Asp307 acts as the 4-aspartylphosphate intermediate in catalysis. Residues Asp344, Glu348, Phe377 to Ser384, and Lys395 each bind ATP. Mg(2+) is bound by residues Asp518 and Asp522. The next 3 helical transmembrane spans lie at Phe588–Met608, Ala616–Leu636, and Ile656–Leu676.

Belongs to the cation transport ATPase (P-type) (TC 3.A.3) family. Type IA subfamily. As to quaternary structure, the system is composed of three essential subunits: KdpA, KdpB and KdpC.

Its subcellular location is the cell inner membrane. The catalysed reaction is K(+)(out) + ATP + H2O = K(+)(in) + ADP + phosphate + H(+). Functionally, part of the high-affinity ATP-driven potassium transport (or Kdp) system, which catalyzes the hydrolysis of ATP coupled with the electrogenic transport of potassium into the cytoplasm. This subunit is responsible for energy coupling to the transport system and for the release of the potassium ions to the cytoplasm. In Escherichia coli (strain UTI89 / UPEC), this protein is Potassium-transporting ATPase ATP-binding subunit.